A 75-amino-acid polypeptide reads, in one-letter code: Small ribosomal subunit protein bS16 (75 aa).

The protein belongs to the bacterial ribosomal protein bS16 family.

This chain is Small ribosomal subunit protein bS16, found in Campylobacter lari (strain RM2100 / D67 / ATCC BAA-1060).